Consider the following 372-residue polypeptide: Fatty acid 2-hydroxylase (372 aa).

The Cytochrome b5 heme-binding domain occupies Ala-8–Arg-86. Heme is bound by residues His-43 and His-69. 2 helical membrane passes run Val-168–Tyr-188 and Ser-213–Ile-233. Positions Phe-219–Thr-361 constitute a Fatty acid hydroxylase domain. Zn(2+) is bound by residues His-234, His-239, His-257, His-260, and His-261. 2 helical membrane-spanning segments follow: residues Ser-268–Leu-288 and Leu-290–Leu-310. Residues His-315, His-319, His-336, His-339, and His-340 each coordinate Zn(2+).

The protein belongs to the sterol desaturase family. SCS7 subfamily. The cofactor is Zn(2+). As to expression, expressed in brain (at protein level). Detected in cerebellum and forebrain. Expression in the white matter is mainly restricted in oligodendrocytes. Expressed in stomach, kidney, skin and testis. Expressed in sebaceous gland.

The protein localises to the endoplasmic reticulum membrane. The protein resides in the microsome membrane. The catalysed reaction is a 1,2-saturated fatty acid + 2 Fe(II)-[cytochrome b5] + O2 + 2 H(+) = a (R)-2-hydroxy fatty acid + 2 Fe(III)-[cytochrome b5] + H2O. It carries out the reaction hexadecanoate + 2 Fe(II)-[cytochrome b5] + O2 + 2 H(+) = (R)-2-hydroxyhexadecanoate + 2 Fe(III)-[cytochrome b5] + H2O. It catalyses the reaction octadecanoate + 2 Fe(II)-[cytochrome b5] + O2 + 2 H(+) = (R)-2-hydroxyoctadecanoate + 2 Fe(III)-[cytochrome b5] + H2O. The enzyme catalyses docosanoate + 2 Fe(II)-[cytochrome b5] + O2 + 2 H(+) = 2-hydroxydocosanoate + 2 Fe(III)-[cytochrome b5] + H2O. The catalysed reaction is tetracosanoate + 2 Fe(II)-[cytochrome b5] + O2 + 2 H(+) = (R)-2-hydroxytetracosanoate + 2 Fe(III)-[cytochrome b5] + H2O. It functions in the pathway sphingolipid metabolism; galactosylceramide biosynthesis. Its pathway is lipid metabolism; fatty acid metabolism. Its function is as follows. Catalyzes the hydroxylation of free fatty acids at the C-2 position to produce 2-hydroxy fatty acids, which are building blocks of sphingolipids and glycosphingolipids common in neural tissue and epidermis. FA2H is stereospecific for the production of (R)-2-hydroxy fatty acids. Plays an essential role in the synthesis of galactosphingolipids of the myelin sheath. Responsible for the synthesis of sphingolipids and glycosphingolipids involved in the formation of epidermal lamellar bodies critical for skin permeability barrier. Participates in the synthesis of glycosphingolipids and a fraction of type II wax diesters in sebaceous gland, specifically regulating hair follicle homeostasis. Involved in the synthesis of sphingolipids of plasma membrane rafts, controlling lipid raft mobility and trafficking of raft-associated proteins. The sequence is that of Fatty acid 2-hydroxylase from Mus musculus (Mouse).